Consider the following 412-residue polypeptide: Phosphoglycerate kinase, plasmid (412 aa).

Substrate is bound by residues 39–41 (DLN), Arg55, 78–81 (HLGR), Arg133, and Arg166. Residues Lys217, Glu339, and 365–368 (GGDT) each bind ATP.

It belongs to the phosphoglycerate kinase family. In terms of assembly, monomer.

The protein resides in the cytoplasm. The catalysed reaction is (2R)-3-phosphoglycerate + ATP = (2R)-3-phospho-glyceroyl phosphate + ADP. Its pathway is carbohydrate biosynthesis; Calvin cycle. The chain is Phosphoglycerate kinase, plasmid (cbbKP) from Cupriavidus necator (strain ATCC 17699 / DSM 428 / KCTC 22496 / NCIMB 10442 / H16 / Stanier 337) (Ralstonia eutropha).